Here is a 29-residue protein sequence, read N- to C-terminus: Amelogenin-like protein (29 aa).

Serine 16 carries the post-translational modification Phosphoserine.

This sequence belongs to the amelogenin family.

Its subcellular location is the secreted. The protein resides in the extracellular space. The protein localises to the extracellular matrix. Tooth enamel proteins are produced in ameloblasts and play a role in biomineralization. This Oryctolagus cuniculus (Rabbit) protein is Amelogenin-like protein (AMEL).